The sequence spans 125 residues: MARLAGVDLPREKRLEVALTYIYGVGKTRAHKTLAETGISPDVRVKDLSDAELVQLRDYIEVNYKVEGDLRREVAADIRRKVEIGSYEGIRHRRGLPVRGQRTKTNARTRKGPKRTVAGKKKAGR.

A disordered region spans residues arginine 93–arginine 125.

It belongs to the universal ribosomal protein uS13 family. In terms of assembly, part of the 30S ribosomal subunit. Forms a loose heterodimer with protein S19. Forms two bridges to the 50S subunit in the 70S ribosome.

Functionally, located at the top of the head of the 30S subunit, it contacts several helices of the 16S rRNA. In the 70S ribosome it contacts the 23S rRNA (bridge B1a) and protein L5 of the 50S subunit (bridge B1b), connecting the 2 subunits; these bridges are implicated in subunit movement. Contacts the tRNAs in the A and P-sites. The polypeptide is Small ribosomal subunit protein uS13 (Renibacterium salmoninarum (strain ATCC 33209 / DSM 20767 / JCM 11484 / NBRC 15589 / NCIMB 2235)).